The chain runs to 596 residues: Phosphomethylpyrimidine synthase 1 (596 aa).

Residues Asn-228, Met-257, Tyr-286, His-322, 342–344 (SRG), 383–386 (DGLR), and Glu-422 contribute to the substrate site. His-426 is a Zn(2+) binding site. Tyr-449 is a substrate binding site. His-490 lines the Zn(2+) pocket. [4Fe-4S] cluster-binding residues include Cys-570, Cys-573, and Cys-578.

The protein belongs to the ThiC family. As to quaternary structure, homodimer. The cofactor is [4Fe-4S] cluster.

The catalysed reaction is 5-amino-1-(5-phospho-beta-D-ribosyl)imidazole + S-adenosyl-L-methionine = 4-amino-2-methyl-5-(phosphooxymethyl)pyrimidine + CO + 5'-deoxyadenosine + formate + L-methionine + 3 H(+). The protein operates within cofactor biosynthesis; thiamine diphosphate biosynthesis. Catalyzes the synthesis of the hydroxymethylpyrimidine phosphate (HMP-P) moiety of thiamine from aminoimidazole ribotide (AIR) in a radical S-adenosyl-L-methionine (SAM)-dependent reaction. This chain is Phosphomethylpyrimidine synthase 1, found in Syntrophotalea carbinolica (strain DSM 2380 / NBRC 103641 / GraBd1) (Pelobacter carbinolicus).